Consider the following 269-residue polypeptide: Phosphonoacetaldehyde hydrolase (269 aa).

Residue aspartate 10 is the Nucleophile of the active site. Aspartate 10 and alanine 12 together coordinate Mg(2+). Lysine 52 functions as the Schiff-base intermediate with substrate in the catalytic mechanism. Aspartate 186 serves as a coordination point for Mg(2+).

This sequence belongs to the HAD-like hydrolase superfamily. PhnX family. Homodimer. Mg(2+) is required as a cofactor.

The enzyme catalyses phosphonoacetaldehyde + H2O = acetaldehyde + phosphate + H(+). Its function is as follows. Involved in phosphonate degradation. In Salmonella heidelberg (strain SL476), this protein is Phosphonoacetaldehyde hydrolase.